The following is a 357-amino-acid chain: S-adenosylmethionine:tRNA ribosyltransferase-isomerase (357 aa).

It belongs to the QueA family. Monomer.

It localises to the cytoplasm. It carries out the reaction 7-aminomethyl-7-carbaguanosine(34) in tRNA + S-adenosyl-L-methionine = epoxyqueuosine(34) in tRNA + adenine + L-methionine + 2 H(+). Its pathway is tRNA modification; tRNA-queuosine biosynthesis. In terms of biological role, transfers and isomerizes the ribose moiety from AdoMet to the 7-aminomethyl group of 7-deazaguanine (preQ1-tRNA) to give epoxyqueuosine (oQ-tRNA). This Buchnera aphidicola subsp. Acyrthosiphon pisum (strain Tuc7) protein is S-adenosylmethionine:tRNA ribosyltransferase-isomerase.